A 253-amino-acid chain; its full sequence is Flap endonuclease Xni (253 aa).

A Mg(2+)-binding site is contributed by Asp-104. A 5'-3' exonuclease domain is found at 160 to 250 (VAPQQLTDFW…HGNLQQLRLN (91 aa)). The K(+) site is built by Leu-171, Ala-172, Pro-180, Ile-182, and Ile-185. The segment at 184–189 (GIGAKT) is interaction with DNA.

The protein belongs to the Xni family. Mg(2+) serves as cofactor. Requires K(+) as cofactor.

Its function is as follows. Has flap endonuclease activity. During DNA replication, flap endonucleases cleave the 5'-overhanging flap structure that is generated by displacement synthesis when DNA polymerase encounters the 5'-end of a downstream Okazaki fragment. This Edwardsiella ictaluri (strain 93-146) protein is Flap endonuclease Xni.